Reading from the N-terminus, the 402-residue chain is Type II NADH:quinone oxidoreductase (402 aa).

FAD is bound by residues 12–16, 39–40, and Val-83; these read GAGYA and NK. Residue Glu-172 is part of the active site. Residues Asp-302, 319-320, and Lys-379 contribute to the FAD site; that span reads AQ.

Belongs to the NADH dehydrogenase family. FAD is required as a cofactor.

Its subcellular location is the cell membrane. The catalysed reaction is a quinone + NADH + H(+) = a quinol + NAD(+). Functionally, alternative, nonproton pumping NADH:quinone oxidoreductase that delivers electrons to the respiratory chain by oxidation of NADH and reduction of quinones, and contributes to the regeneration of NAD(+). The chain is Type II NADH:quinone oxidoreductase from Staphylococcus epidermidis (strain ATCC 35984 / DSM 28319 / BCRC 17069 / CCUG 31568 / BM 3577 / RP62A).